The primary structure comprises 220 residues: Flavin-dependent thymidylate synthase (220 aa).

In terms of domain architecture, ThyX spans 1–208 (MKIDILDKGF…PWTFEAFLKY (208 aa)). FAD contacts are provided by residues threonine 55, 78-80 (RHR), and glutamate 86. DUMP contacts are provided by residues 75–78 (QWFR), 86–90 (ELSGR), and arginine 147. Positions 78–88 (RHRIASYNELS) match the ThyX motif motif. FAD is bound by residues 163–165 (NAR) and asparagine 169. Arginine 174 serves as a coordination point for dUMP. Catalysis depends on arginine 174, which acts as the Involved in ionization of N3 of dUMP, leading to its activation.

Belongs to the thymidylate synthase ThyX family. In terms of assembly, homotetramer. FAD is required as a cofactor.

The enzyme catalyses dUMP + (6R)-5,10-methylene-5,6,7,8-tetrahydrofolate + NADPH + H(+) = dTMP + (6S)-5,6,7,8-tetrahydrofolate + NADP(+). It functions in the pathway pyrimidine metabolism; dTTP biosynthesis. Catalyzes the reductive methylation of 2'-deoxyuridine-5'-monophosphate (dUMP) to 2'-deoxythymidine-5'-monophosphate (dTMP) while utilizing 5,10-methylenetetrahydrofolate (mTHF) as the methyl donor, and NADPH and FADH(2) as the reductant. In Thermotoga petrophila (strain ATCC BAA-488 / DSM 13995 / JCM 10881 / RKU-1), this protein is Flavin-dependent thymidylate synthase.